A 330-amino-acid polypeptide reads, in one-letter code: Peptide transport system ATP-binding protein SapD (330 aa).

Residues 6 to 259 form the ABC transporter domain; that stretch reads IRNLTIEFKT…PHHPYTQALI (254 aa). An ATP-binding site is contributed by 40–47; it reads GESGSGKS.

It belongs to the ABC transporter superfamily.

Its subcellular location is the cell inner membrane. Functionally, involved in a peptide intake transport system that plays a role in the resistance to antimicrobial peptides. This Escherichia coli O157:H7 protein is Peptide transport system ATP-binding protein SapD (sapD).